The chain runs to 204 residues: Octanoyltransferase (204 aa).

The region spanning Q27–L202 is the BPL/LPL catalytic domain. Substrate contacts are provided by residues R65–H72, S132–G134, and G145–A147. C163 functions as the Acyl-thioester intermediate in the catalytic mechanism.

It belongs to the LipB family.

It is found in the cytoplasm. It catalyses the reaction octanoyl-[ACP] + L-lysyl-[protein] = N(6)-octanoyl-L-lysyl-[protein] + holo-[ACP] + H(+). It functions in the pathway protein modification; protein lipoylation via endogenous pathway; protein N(6)-(lipoyl)lysine from octanoyl-[acyl-carrier-protein]: step 1/2. Catalyzes the transfer of endogenously produced octanoic acid from octanoyl-acyl-carrier-protein onto the lipoyl domains of lipoate-dependent enzymes. Lipoyl-ACP can also act as a substrate although octanoyl-ACP is likely to be the physiological substrate. The sequence is that of Octanoyltransferase from Citrifermentans bemidjiense (strain ATCC BAA-1014 / DSM 16622 / JCM 12645 / Bem) (Geobacter bemidjiensis).